We begin with the raw amino-acid sequence, 239 residues long: Acidic leucine-rich nuclear phosphoprotein 32 family member B (239 aa).

LRR repeat units follow at residues 16-40 (AADA…LTSE), 43-64 (SLEF…PKLP), 65-87 (KLKK…AERT), and 89-110 (NLTH…EPLK). An LRRCT domain is found at 123-165 (CEVTMLNNYRESVFELLPKLTFLDGFDADDQEAPDSDPEAEDL). Positions 149–215 (DADDQEAPDS…EEDEDDEDVP (67 aa)) are enriched in acidic residues. Residues 149-239 (DADDQEAPDS…EEEEDDEDDE (91 aa)) are disordered. Residues 216 to 225 (QGEKRKRDLS) show a composition bias toward basic and acidic residues. Residues 226–239 (DEGEEEEEDDEDDE) are compositionally biased toward acidic residues.

It belongs to the ANP32 family.

It is found in the nucleus. Functionally, multifunctional protein working as a cell cycle progression factor as well as a cell survival factor. Required for the progression from the G1 to the S phase. Anti-apoptotic protein which functions as a caspase-3 inhibitor. Has no phosphatase 2A (PP2A) inhibitor activity. Exhibits histone chaperone properties, stimulating core histones to assemble into a nucleosome. This is Acidic leucine-rich nuclear phosphoprotein 32 family member B (anp32b) from Xenopus laevis (African clawed frog).